Reading from the N-terminus, the 455-residue chain is MLKDFTRKKVLVIGAGRSGLAVSRFLVKKGASVVLADAGKPDYPDGELEDLTAAGVELSLGGYPGVGKESVDLVVVSPGVPLTVEPVRAAVREGIPVTGELELAYYFTRSPIVAVTGTNGKTTTTTLIGEIFKDAGMNTLVGGNIGSPLIAEVERYGPDDVIVAEVSSFQLETASTFRPKVGVVLNITPDHLDRHGTMGNYAATKARMFANQGPGDFAVLNCDDPLAASLKAGVRSRVIFFSRRKELKEGVWVSGGMIVASLNGHREVVCRSDELGLPGAHNLENALAAVAAAKAMGIESNSLAGTLRRFKGVAHRLEFVAEVDGVRYINDSKGTNPDAAIKALESYGEPIVLIAGGKNKGSDFREFARKVKEKAKVLVVLGQSAGLIAEAARAEGFENILYADGFREAVLLARRVARPGDIVLLSPACASWDMFKSFEERGDLFKEIVLSLKKG.

Residue 117-123 coordinates ATP; that stretch reads GTNGKTT.

This sequence belongs to the MurCDEF family.

The protein localises to the cytoplasm. The catalysed reaction is UDP-N-acetyl-alpha-D-muramoyl-L-alanine + D-glutamate + ATP = UDP-N-acetyl-alpha-D-muramoyl-L-alanyl-D-glutamate + ADP + phosphate + H(+). It functions in the pathway cell wall biogenesis; peptidoglycan biosynthesis. Its function is as follows. Cell wall formation. Catalyzes the addition of glutamate to the nucleotide precursor UDP-N-acetylmuramoyl-L-alanine (UMA). The chain is UDP-N-acetylmuramoylalanine--D-glutamate ligase from Pelotomaculum thermopropionicum (strain DSM 13744 / JCM 10971 / SI).